A 103-amino-acid polypeptide reads, in one-letter code: Turripeptide OL55-like (103 aa).

Contains 8 disulfide bonds. In terms of tissue distribution, expressed by the venom duct.

The protein localises to the secreted. Functionally, acts as a neurotoxin by inhibiting an ion channel. This Lophiotoma albina (Sea snail) protein is Turripeptide OL55-like.